Here is a 1479-residue protein sequence, read N- to C-terminus: C-type mannose receptor 2 (1479 aa).

Positions 1–30 are cleaved as a signal peptide; sequence MVPIRPALAPWPRHLLRCVLLLGGLRLGHP. The Extracellular portion of the chain corresponds to 31 to 1413; sequence ADSAAALLEP…SAALPESPVA (1383 aa). Residues 37–190 form the Ricin B-type lectin domain; it reads LLEPDVFLIF…SHGKPCTIPF (154 aa). A disulfide bridge connects residues Cys-92 and Cys-111. Residues Asn-101 and Asn-139 are each glycosylated (N-linked (GlcNAc...) asparagine). The 49-residue stretch at 181–229 folds into the Fibronectin type-II domain; sequence SHGKPCTIPFKYDNQWFHGCTSTGREDGHLWCATTQDYGKDERWGFCPI. 4 cysteine pairs are disulfide-bonded: Cys-186/Cys-212, Cys-200/Cys-227, Cys-265/Cys-358, and Cys-334/Cys-350. Residues 243–359 enclose the C-type lectin 1 domain; it reads LTDSCYQFNF…CSIALPYVCK (117 aa). N-linked (GlcNAc...) asparagine glycosylation occurs at Asn-363. C-type lectin domains follow at residues 388-504, 527-643, 677-808, 831-950, 978-1106, 1131-1242, and 1271-1391; these read FQGH…SICK, HSPS…RYIC, KLRH…WICK, FQEA…YICK, FLNK…GFIC, YLNH…GAVC, and FREH…GVVC. Intrachain disulfides connect Cys-409–Cys-503, Cys-480–Cys-495, Cys-617–Cys-634, Cys-703–Cys-807, Cys-784–Cys-799, Cys-852–Cys-949, and Cys-926–Cys-941. Residue Asn-1028 is glycosylated (N-linked (GlcNAc...) asparagine). Cysteines 1077 and 1097 form a disulfide. Lys-1141 is covalently cross-linked (Glycyl lysine isopeptide (Lys-Gly) (interchain with G-Cter in SUMO1)). Cys-1219 and Cys-1233 are joined by a disulfide. The N-linked (GlcNAc...) asparagine glycan is linked to Asn-1348. Cys-1367 and Cys-1382 are joined by a disulfide. A helical membrane pass occupies residues 1414 to 1434; that stretch reads LVVVLTAVLLLLALMTAALIL. Residues 1435–1479 lie on the Cytoplasmic side of the membrane; sequence YRRRQSAERGSFEGARYSRSSHSGPAEATEKNILVSDMEMNEQQE. Positions 1446–1479 are disordered; sequence FEGARYSRSSHSGPAEATEKNILVSDMEMNEQQE.

In terms of assembly, interacts directly with PLAUR/UPAR and PLAU/pro-UPA to form a tri-molecular complex. Interacts with collagen V and with C-terminal region of type I collagen/COL1A1. Post-translationally, phosphorylated. In terms of tissue distribution, highly expressed in heart, lung and kidney, but little or no expression in brain, thymus or adult liver. Expressed at highly endothelialized sites such as those in choroid plexus and kidney glomerulai as well as in chondrocytes in cartilaginous regions of the embryo.

The protein resides in the membrane. Functionally, may play a role as endocytotic lectin receptor displaying calcium-dependent lectin activity. Internalizes glycosylated ligands from the extracellular space for release in an endosomal compartment via clathrin-mediated endocytosis. May be involved in plasminogen activation system controlling the extracellular level of PLAUR/PLAU, and thus may regulate protease activity at the cell surface. May contribute to cellular uptake, remodeling and degradation of extracellular collagen matrices. May participate in remodeling of extracellular matrix cooperating with the matrix metalloproteinases (MMPs). The polypeptide is C-type mannose receptor 2 (Mrc2) (Mus musculus (Mouse)).